A 314-amino-acid chain; its full sequence is Peroxidase 2 (314 aa).

An N-terminal signal peptide occupies residues Met-1 to Ala-23. A Pyrrolidone carboxylic acid modification is found at Gln-24. 4 cysteine pairs are disulfide-bonded: Cys-34-Cys-109, Cys-67-Cys-72, Cys-115-Cys-310, and Cys-194-Cys-219. His-65 (proton acceptor) is an active-site residue. Residues Asp-66, Val-69, Gly-71, Asp-73, and Ser-75 each coordinate Ca(2+). N-linked (GlcNAc...) asparagine glycosylation is present at Asn-148. Pro-157 contacts substrate. A glycan (N-linked (GlcNAc...) asparagine) is linked at Asn-169. His-187 contributes to the heme b binding site. Thr-188 is a binding site for Ca(2+). N-linked (GlcNAc...) asparagine glycosylation occurs at Asn-203. 3 residues coordinate Ca(2+): Asp-234, Thr-237, and Asp-242. N-linked (GlcNAc...) asparagine glycans are attached at residues Asn-274 and Asn-309.

This sequence belongs to the peroxidase family. Classical plant (class III) peroxidase subfamily. Ca(2+) is required as a cofactor. The cofactor is heme b.

It localises to the secreted. The enzyme catalyses 2 a phenolic donor + H2O2 = 2 a phenolic radical donor + 2 H2O. Removal of H(2)O(2), oxidation of toxic reductants, biosynthesis and degradation of lignin, suberization, auxin catabolism, response to environmental stresses such as wounding, pathogen attack and oxidative stress. These functions might be dependent on each isozyme/isoform in each plant tissue. The protein is Peroxidase 2 (PRX112) of Oryza sativa subsp. indica (Rice).